A 456-amino-acid polypeptide reads, in one-letter code: Esterase MT1326 (456 aa).

LysM domains are found at residues 3 to 50, 54 to 101, and 105 to 152; these read STHA…RLIM, TRYT…RLIM, and TRYT…VLVI. Active-site residues include serine 294, aspartate 391, and histidine 425.

This sequence belongs to the AB hydrolase superfamily.

It localises to the secreted. It is found in the cell wall. The catalysed reaction is a fatty acid ester + H2O = an aliphatic alcohol + a fatty acid + H(+). Functionally, exhibits lipolytic activity with medium chain length esters as optimum substrates. This chain is Esterase MT1326, found in Mycobacterium tuberculosis (strain CDC 1551 / Oshkosh).